Reading from the N-terminus, the 517-residue chain is Gamma-1-syntrophin (517 aa).

In terms of domain architecture, PDZ spans 57-140; that stretch reads TVTIRRQTVG…EVTLTVSFLK (84 aa). The PH domain maps to 283-390; that stretch reads QIVYMGWCEA…WERAFQTATF (108 aa).

Belongs to the syntrophin family. Isoform 1, but not isoform 2, interacts with the dystrophin protein DMD and related proteins DTNA and DTNB. Interacts with DGKZ. In terms of tissue distribution, brain specific. In CNS, it is expressed in the perikaryon and proximal portion of the neuronal processes. Strong expression in the hippocampus, neuron-rich dendate granule cells, and pyramidal cell layers. Highly expressed in neurons of the cerebral cortex. Also expressed in the cerebellar cortex, deep cerebellar nuclei, thalamus, and basal ganglia. No expression in muscle cells.

The protein localises to the cytoplasm. The protein resides in the cytoskeleton. It localises to the nucleus. Its function is as follows. Adapter protein that binds to and probably organizes the subcellular localization of a variety of proteins. May link various receptors to the actin cytoskeleton and the dystrophin glycoprotein complex. May participate in regulating the subcellular location of diacylglycerol kinase-zeta to ensure that diacylglycerol is rapidly inactivated following receptor activation. This chain is Gamma-1-syntrophin (SNTG1), found in Homo sapiens (Human).